A 259-amino-acid polypeptide reads, in one-letter code: Energy-coupling factor transporter ATP-binding protein EcfA1 (259 aa).

One can recognise an ABC transporter domain in the interval 3-230 (ITLNSVSFRY…EFDDVEIPFK (228 aa)). 38-43 (GSGKTT) contributes to the ATP binding site. Glutamate 157 functions as the Proton acceptor in the catalytic mechanism.

The protein belongs to the ABC transporter superfamily. Energy-coupling factor EcfA family. In terms of assembly, forms a heterodimer with EcfA2. Forms a stable energy-coupling factor (ECF) transporter complex composed of 2 membrane-embedded substrate-binding proteins (S component, RibU, BioY), 2 ATP-binding proteins (A component) and 2 transmembrane proteins (T component) upon coexpression in E.coli. Stable subcomplexes with both A plus T components can also be isolated. This complex interacts with at least 2 substrate-specific components, BioY and RibU.

It is found in the cell inner membrane. In terms of biological role, ATP-binding (A) component of a common energy-coupling factor (ECF) ABC-transporter complex. Unlike classic ABC transporters this ECF transporter provides the energy necessary to transport a number of different substrates. Expression of the complex plus RibU in E.coli allows riboflavin uptake; uptake does not occur in the absence of RibU or the EcfA1A2T complex. In Thermotoga maritima (strain ATCC 43589 / DSM 3109 / JCM 10099 / NBRC 100826 / MSB8), this protein is Energy-coupling factor transporter ATP-binding protein EcfA1.